The primary structure comprises 278 residues: 3-methyl-2-oxobutanoate hydroxymethyltransferase (278 aa).

Mg(2+)-binding residues include aspartate 49 and aspartate 88. 3-methyl-2-oxobutanoate is bound by residues 49-50 (DS), aspartate 88, and lysine 118. Glutamate 120 lines the Mg(2+) pocket. Residue glutamate 186 is the Proton acceptor of the active site.

This sequence belongs to the PanB family. In terms of assembly, homodecamer; pentamer of dimers. Mg(2+) serves as cofactor.

The protein localises to the cytoplasm. The enzyme catalyses 3-methyl-2-oxobutanoate + (6R)-5,10-methylene-5,6,7,8-tetrahydrofolate + H2O = 2-dehydropantoate + (6S)-5,6,7,8-tetrahydrofolate. Its pathway is cofactor biosynthesis; (R)-pantothenate biosynthesis; (R)-pantoate from 3-methyl-2-oxobutanoate: step 1/2. In terms of biological role, catalyzes the reversible reaction in which hydroxymethyl group from 5,10-methylenetetrahydrofolate is transferred onto alpha-ketoisovalerate to form ketopantoate. This Bordetella parapertussis (strain 12822 / ATCC BAA-587 / NCTC 13253) protein is 3-methyl-2-oxobutanoate hydroxymethyltransferase.